The following is a 313-amino-acid chain: Biotin synthase (313 aa).

Residues 37-263 (YYGKKVKLNM…INPTKEIRIA (227 aa)) enclose the Radical SAM core domain. [4Fe-4S] cluster contacts are provided by Cys-55, Cys-59, and Cys-62. Residues Cys-98, Cys-131, Cys-191, and Arg-261 each contribute to the [2Fe-2S] cluster site.

This sequence belongs to the radical SAM superfamily. Biotin synthase family. As to quaternary structure, homodimer. The cofactor is [4Fe-4S] cluster. [2Fe-2S] cluster is required as a cofactor.

It catalyses the reaction (4R,5S)-dethiobiotin + (sulfur carrier)-SH + 2 reduced [2Fe-2S]-[ferredoxin] + 2 S-adenosyl-L-methionine = (sulfur carrier)-H + biotin + 2 5'-deoxyadenosine + 2 L-methionine + 2 oxidized [2Fe-2S]-[ferredoxin]. It functions in the pathway cofactor biosynthesis; biotin biosynthesis; biotin from 7,8-diaminononanoate: step 2/2. Functionally, catalyzes the conversion of dethiobiotin (DTB) to biotin by the insertion of a sulfur atom into dethiobiotin via a radical-based mechanism. The sequence is that of Biotin synthase from Staphylococcus epidermidis (strain ATCC 12228 / FDA PCI 1200).